Consider the following 160-residue polypeptide: Large ribosomal subunit protein uL11 (160 aa).

It belongs to the universal ribosomal protein uL11 family. Part of the ribosomal stalk of the 50S ribosomal subunit. Interacts with L10 and the large rRNA to form the base of the stalk. L10 forms an elongated spine to which L12 dimers bind in a sequential fashion forming a multimeric L10(L12)X complex.

In terms of biological role, forms part of the ribosomal stalk which helps the ribosome interact with GTP-bound translation factors. This Methanococcus aeolicus (strain ATCC BAA-1280 / DSM 17508 / OCM 812 / Nankai-3) protein is Large ribosomal subunit protein uL11.